The chain runs to 112 residues: Nitrogenase-stabilizing/protective protein NifW (112 aa).

This sequence belongs to the NifW family. As to quaternary structure, homotrimer; associates with NifD.

Its function is as follows. May protect the nitrogenase Fe-Mo protein from oxidative damage. The sequence is that of Nitrogenase-stabilizing/protective protein NifW from Paraburkholderia xenovorans (strain LB400).